Here is a 152-residue protein sequence, read N- to C-terminus: SsrA-binding protein (152 aa).

This sequence belongs to the SmpB family.

The protein localises to the cytoplasm. In terms of biological role, required for rescue of stalled ribosomes mediated by trans-translation. Binds to transfer-messenger RNA (tmRNA), required for stable association of tmRNA with ribosomes. tmRNA and SmpB together mimic tRNA shape, replacing the anticodon stem-loop with SmpB. tmRNA is encoded by the ssrA gene; the 2 termini fold to resemble tRNA(Ala) and it encodes a 'tag peptide', a short internal open reading frame. During trans-translation Ala-aminoacylated tmRNA acts like a tRNA, entering the A-site of stalled ribosomes, displacing the stalled mRNA. The ribosome then switches to translate the ORF on the tmRNA; the nascent peptide is terminated with the 'tag peptide' encoded by the tmRNA and targeted for degradation. The ribosome is freed to recommence translation, which seems to be the essential function of trans-translation. This Rickettsia typhi (strain ATCC VR-144 / Wilmington) protein is SsrA-binding protein.